We begin with the raw amino-acid sequence, 181 residues long: Protein GrpE (181 aa).

Over residues 1–20 (MENTQENPASQSAEENGSET) the composition is skewed to polar residues. The interval 1–39 (MENTQENPASQSAEENGSETQAAQDAAPAAEAADAALAE) is disordered. Residues 21–39 (QAAQDAAPAAEAADAALAE) are compositionally biased toward low complexity.

This sequence belongs to the GrpE family. As to quaternary structure, homodimer.

The protein localises to the cytoplasm. In terms of biological role, participates actively in the response to hyperosmotic and heat shock by preventing the aggregation of stress-denatured proteins, in association with DnaK and GrpE. It is the nucleotide exchange factor for DnaK and may function as a thermosensor. Unfolded proteins bind initially to DnaJ; upon interaction with the DnaJ-bound protein, DnaK hydrolyzes its bound ATP, resulting in the formation of a stable complex. GrpE releases ADP from DnaK; ATP binding to DnaK triggers the release of the substrate protein, thus completing the reaction cycle. Several rounds of ATP-dependent interactions between DnaJ, DnaK and GrpE are required for fully efficient folding. This is Protein GrpE from Burkholderia multivorans (strain ATCC 17616 / 249).